The chain runs to 434 residues: Zinc carboxypeptidase (434 aa).

Positions 1-33 (MSPKRRRLMAAALGACVALVLPLHAGSAQPSTA) are cleaved as a signal peptide. Residues 34–114 (KTPERTVFEV…DFTDPQVGTQ (81 aa)) constitute a propeptide, activation peptide. Positions 122-423 (GYHNFQETVT…SAVELFLSYS (302 aa)) constitute a Peptidase M14 domain. 2 residues coordinate Zn(2+): His183 and Glu186. The tract at residues 270 to 295 (GSSSSGSSETTAARRRSPPRRSPHPH) is disordered. Residues 282-293 (ARRRSPPRRSPH) show a composition bias toward basic residues. Residue His315 coordinates Zn(2+). Glu388 serves as the catalytic Proton donor/acceptor.

It belongs to the peptidase M14 family. It depends on Zn(2+) as a cofactor.

It catalyses the reaction Releases a C-terminal residue, which may be hydrophobic or positively charged.. Its function is as follows. Carboxypeptidase that possesses the specificities of both mammalian Cpase A and B. Thus shows broad substrate specificity, being able to cleave Cbz-Gly-Leu, Cbz-Gly-Val, Cbz-Gly-Phe, Cbz-Gly-Lys and Bz-Gly-Arg in vitro. The protein is Zinc carboxypeptidase of Saccharothrix mutabilis subsp. capreolus (Streptomyces capreolus).